Consider the following 116-residue polypeptide: Large ribosomal subunit protein bL17 (116 aa).

This sequence belongs to the bacterial ribosomal protein bL17 family. Part of the 50S ribosomal subunit. Contacts protein L32.

In Prochlorococcus marinus (strain MIT 9312), this protein is Large ribosomal subunit protein bL17.